A 462-amino-acid polypeptide reads, in one-letter code: Cysteine--tRNA ligase (462 aa).

C30 contacts Zn(2+). A 'HIGH' region motif is present at residues 32-42 (MTVYDYCHVGH). Positions 214, 239, and 243 each coordinate Zn(2+). Residues 271 to 275 (KMSKS) carry the 'KMSKS' region motif. K274 serves as a coordination point for ATP.

Belongs to the class-I aminoacyl-tRNA synthetase family. Monomer. Zn(2+) is required as a cofactor.

Its subcellular location is the cytoplasm. It catalyses the reaction tRNA(Cys) + L-cysteine + ATP = L-cysteinyl-tRNA(Cys) + AMP + diphosphate. This Cupriavidus necator (strain ATCC 17699 / DSM 428 / KCTC 22496 / NCIMB 10442 / H16 / Stanier 337) (Ralstonia eutropha) protein is Cysteine--tRNA ligase.